Here is a 785-residue protein sequence, read N- to C-terminus: Cadherin-7 (785 aa).

The N-terminal stretch at 1–27 (MKLGKVELCHFLQLIALFLCFSGMSQA) is a signal peptide. Positions 28–47 (ELPRSRSKPYFQSGRSRTKR) are excised as a propeptide. Residues 28-607 (ELPRSRSKPY…AYVLPAGLST (580 aa)) are Extracellular-facing. 5 consecutive Cadherin domains span residues 49-153 (WVWN…EPKF), 154-262 (LDGP…PPRF), 263-377 (PRRS…PPVF), 378-482 (SSPL…APEF), and 482-599 (FAMD…AEAY). N449 and N530 each carry an N-linked (GlcNAc...) asparagine glycan. The helical transmembrane segment at 608–628 (GALIAILACVLTLLVLILLIV) threads the bilayer. The Cytoplasmic portion of the chain corresponds to 629 to 785 (TMRRRKKEPL…YGNGQESLYS (157 aa)).

It localises to the cell membrane. Its function is as follows. Cadherins are calcium-dependent cell adhesion proteins. They preferentially interact with themselves in a homophilic manner in connecting cells; cadherins may thus contribute to the sorting of heterogeneous cell types. The chain is Cadherin-7 (Cdh7) from Mus musculus (Mouse).